A 155-amino-acid polypeptide reads, in one-letter code: Endoribonuclease YbeY (155 aa).

Residues His120, His124, and His130 each coordinate Zn(2+).

This sequence belongs to the endoribonuclease YbeY family. It depends on Zn(2+) as a cofactor.

It is found in the cytoplasm. Single strand-specific metallo-endoribonuclease involved in late-stage 70S ribosome quality control and in maturation of the 3' terminus of the 16S rRNA. The chain is Endoribonuclease YbeY from Borreliella burgdorferi (strain ATCC 35210 / DSM 4680 / CIP 102532 / B31) (Borrelia burgdorferi).